Reading from the N-terminus, the 746-residue chain is tRNA(Met) cytidine acetyltransferase TmcA (746 aa).

Residues 181-200 are disordered; it reads ARAETGGNPPSPGDSACRTE. Residues glutamine 202, 228 to 237, and arginine 370 contribute to the ATP site; that span reads GRGKSAALGI. The 213-residue stretch at 405 to 617 folds into the N-acetyltransferase domain; it reads VAVERLDRDA…VHLPHQLADP (213 aa). Acetyl-CoA-binding positions include 517 to 519, 524 to 530, glutamate 557, and arginine 564; these read IAV and QGQGLGT.

It belongs to the RNA cytidine acetyltransferase family. TmcA subfamily.

The protein resides in the cytoplasm. It catalyses the reaction cytidine(34) in elongator tRNA(Met) + acetyl-CoA + ATP + H2O = N(4)-acetylcytidine(34) in elongator tRNA(Met) + ADP + phosphate + CoA + H(+). Its function is as follows. Catalyzes the formation of N(4)-acetylcytidine (ac(4)C) at the wobble position of tRNA(Met), by using acetyl-CoA as an acetyl donor and ATP (or GTP). The protein is tRNA(Met) cytidine acetyltransferase TmcA of Nitrosococcus halophilus (strain Nc4).